An 84-amino-acid chain; its full sequence is Cell division topological specificity factor (84 aa).

It belongs to the MinE family.

In terms of biological role, prevents the cell division inhibition by proteins MinC and MinD at internal division sites while permitting inhibition at polar sites. This ensures cell division at the proper site by restricting the formation of a division septum at the midpoint of the long axis of the cell. This is Cell division topological specificity factor from Azotobacter vinelandii (strain DJ / ATCC BAA-1303).